The following is a 188-amino-acid chain: Peptide deformylase (188 aa).

Residues cysteine 109 and histidine 152 each coordinate Fe cation. Glutamate 153 is an active-site residue. Histidine 156 contacts Fe cation.

It belongs to the polypeptide deformylase family. Fe(2+) serves as cofactor.

It carries out the reaction N-terminal N-formyl-L-methionyl-[peptide] + H2O = N-terminal L-methionyl-[peptide] + formate. Functionally, removes the formyl group from the N-terminal Met of newly synthesized proteins. Requires at least a dipeptide for an efficient rate of reaction. N-terminal L-methionine is a prerequisite for activity but the enzyme has broad specificity at other positions. The sequence is that of Peptide deformylase from Chloroflexus aggregans (strain MD-66 / DSM 9485).